We begin with the raw amino-acid sequence, 329 residues long: UDP-N-acetylenolpyruvoylglucosamine reductase (329 aa).

An FAD-binding PCMH-type domain is found at arginine 28–glycine 192. The active site involves arginine 172. A disordered region spans residues aspartate 204–asparagine 225. Residue serine 221 is the Proton donor of the active site. Glutamate 291 is an active-site residue. A disordered region spans residues leucine 303–threonine 329. Gly residues predominate over residues alanine 311–serine 320.

This sequence belongs to the MurB family. The cofactor is FAD.

Its subcellular location is the cytoplasm. The catalysed reaction is UDP-N-acetyl-alpha-D-muramate + NADP(+) = UDP-N-acetyl-3-O-(1-carboxyvinyl)-alpha-D-glucosamine + NADPH + H(+). It functions in the pathway cell wall biogenesis; peptidoglycan biosynthesis. Its function is as follows. Cell wall formation. This Anaeromyxobacter dehalogenans (strain 2CP-C) protein is UDP-N-acetylenolpyruvoylglucosamine reductase.